The sequence spans 83 residues: Hainantoxin-III 6 (83 aa).

The N-terminal stretch at 1–21 is a signal peptide; the sequence is MKASMFLALAGLVLLFVVGYA. Residues 22–48 constitute a propeptide that is removed on maturation; it reads SESEEKESPRELLSKIFAVDDFKGEER. 3 disulfides stabilise this stretch: cysteine 50-cysteine 65, cysteine 57-cysteine 70, and cysteine 64-cysteine 77. The residue at position 81 (leucine 81) is a Leucine amide.

This sequence belongs to the neurotoxin 10 (Hwtx-1) family. 15 (Hntx-3) subfamily. In terms of assembly, monomer. In terms of tissue distribution, expressed by the venom gland.

Its subcellular location is the secreted. Selective antagonist of neuronal tetrodotoxin (TTX)-sensitive voltage-gated sodium channels (IC(50)=1270 nM on Nav1.1/SCN1A, 270 nM on Nav1.2/SCN2A, 491 nM on Nav1.3/SCN3A and 232 nM on Nav1.7/SCN9A). This toxin suppress Nav1.7 current amplitude without significantly altering the activation, inactivation, and repriming kinetics. Short extreme depolarizations partially activate the toxin-bound channel, indicating voltage-dependent inhibition of this toxin. This toxin increases the deactivation of the Nav1.7 current after extreme depolarizations. The toxin-Nav1.7 complex is gradually dissociated upon prolonged strong depolarizations in a voltage-dependent manner, and the unbound toxin rebinds to Nav1.7 after a long repolarization. Moreover, analysis of chimeric channels showed that the DIIS3-S4 linker is critical for toxin binding to Nav1.7. These data are consistent with this toxin interacting with Nav1.7 site 4 and trapping the domain II voltage sensor in the closed state. The protein is Hainantoxin-III 6 of Cyriopagopus hainanus (Chinese bird spider).